Consider the following 477-residue polypeptide: Glycogen synthase (477 aa).

K15 contributes to the ADP-alpha-D-glucose binding site.

It belongs to the glycosyltransferase 1 family. Bacterial/plant glycogen synthase subfamily.

The catalysed reaction is [(1-&gt;4)-alpha-D-glucosyl](n) + ADP-alpha-D-glucose = [(1-&gt;4)-alpha-D-glucosyl](n+1) + ADP + H(+). Its pathway is glycan biosynthesis; glycogen biosynthesis. In terms of biological role, synthesizes alpha-1,4-glucan chains using ADP-glucose. The chain is Glycogen synthase from Citrobacter koseri (strain ATCC BAA-895 / CDC 4225-83 / SGSC4696).